Reading from the N-terminus, the 761-residue chain is Zinc finger protein 711 (761 aa).

Glycyl lysine isopeptide (Lys-Gly) (interchain with G-Cter in SUMO2) cross-links involve residues Lys-224, Lys-235, and Lys-296. 5 C2H2-type zinc fingers span residues 383–408 (YPCH…HPDH), 414–436 (YQCT…LESH), 476–499 (HKCK…LAVH), 505–527 (HVCV…MRTH), and 533–556 (YQCQ…KSKH). The C2H2-type 6; atypical zinc-finger motif lies at 562–584 (YKCEHCPQAFGDERELQRHLDLF). Zn(2+) is bound by residues Cys-564, Cys-567, and His-580. 6 consecutive C2H2-type zinc fingers follow at residues 590 to 613 (HQCP…ISVH), 619 to 641 (HKCE…SDIH), 647 to 670 (HQCR…LSVH), 676 to 698 (LKCK…MKTH), 704 to 727 (YQCE…ISIH), and 733 to 755 (HRCE…IMRH).

It belongs to the krueppel C2H2-type zinc-finger protein family. As to quaternary structure, interacts with PHF8.

The protein resides in the nucleus. Transcription regulator required for brain development. Probably acts as a transcription factor that binds to the promoter of target genes and recruits PHF8 histone demethylase, leading to activated expression of genes involved in neuron development, such as KDM5C. May compete with transcription factor ARX for activation of expression of KDM5C. The protein is Zinc finger protein 711 (Znf711) of Mus musculus (Mouse).